The chain runs to 396 residues: Elongation factor Tu (396 aa).

The tr-type G domain maps to 10–206; the sequence is KPHVNVGTIG…ALDSYIPEPT (197 aa). Residues 19–26 are G1; the sequence is GHVDHGKT. 19–26 is a GTP binding site; it reads GHVDHGKT. Mg(2+) is bound at residue Thr26. The G2 stretch occupies residues 60 to 64; that stretch reads GITIS. Residues 81-84 are G3; sequence DCPG. GTP is bound by residues 81–85 and 136–139; these read DCPGH and NKAD. The segment at 136–139 is G4; the sequence is NKAD. The interval 174 to 176 is G5; that stretch reads SAL.

It belongs to the TRAFAC class translation factor GTPase superfamily. Classic translation factor GTPase family. EF-Tu/EF-1A subfamily. As to quaternary structure, monomer.

It is found in the cytoplasm. It catalyses the reaction GTP + H2O = GDP + phosphate + H(+). In terms of biological role, GTP hydrolase that promotes the GTP-dependent binding of aminoacyl-tRNA to the A-site of ribosomes during protein biosynthesis. The polypeptide is Elongation factor Tu (Hydrogenovibrio crunogenus (strain DSM 25203 / XCL-2) (Thiomicrospira crunogena)).